The primary structure comprises 240 residues: Uridylate kinase (240 aa).

13-16 (KASG) is a binding site for ATP. Residues 21 to 26 (GAQGFG) form an involved in allosteric activation by GTP region. Gly-55 contributes to the UMP binding site. Residues Gly-56 and Arg-60 each contribute to the ATP site. Residues Asp-75 and 136-143 (TGNPFFTT) each bind UMP. ATP is bound by residues Thr-163, Gln-164, Tyr-169, and Asp-172.

This sequence belongs to the UMP kinase family. As to quaternary structure, homohexamer.

It localises to the cytoplasm. It catalyses the reaction UMP + ATP = UDP + ADP. It functions in the pathway pyrimidine metabolism; CTP biosynthesis via de novo pathway; UDP from UMP (UMPK route): step 1/1. With respect to regulation, allosterically activated by GTP. Inhibited by UTP. Functionally, catalyzes the reversible phosphorylation of UMP to UDP. This is Uridylate kinase from Rhizobium etli (strain ATCC 51251 / DSM 11541 / JCM 21823 / NBRC 15573 / CFN 42).